The following is a 935-amino-acid chain: C-1-tetrahydrofolate synthase, cytoplasmic (935 aa).

Position 1 is an N-acetylmethionine (Met1). The tract at residues 2 to 291 (APAGILNGKL…MLMQSTVESA (290 aa)) is methylenetetrahydrofolate dehydrogenase and methenyltetrahydrofolate cyclohydrolase (D/C) domain. Residues 52–56 (YINVK) and 99–101 (VQL) contribute to the substrate site. Lys56 is an active-site residue. NADP(+)-binding positions include 172–174 (GRS) and Ser197. Substrate is bound at residue 272 to 276 (PGGVG). The interval 310-935 (LNLKTPVPSD…PETEQVNGLF (626 aa)) is formyltetrahydrofolate synthetase domain. Ser318 carries the post-translational modification Phosphoserine. 380–387 (TPLGEGKS) serves as a coordination point for ATP. Phosphoserine occurs at positions 413 and 490.

It in the N-terminal section; belongs to the tetrahydrofolate dehydrogenase/cyclohydrolase family. In the C-terminal section; belongs to the formate--tetrahydrofolate ligase family. Homodimer.

It localises to the cytoplasm. It catalyses the reaction (6R)-5,10-methylene-5,6,7,8-tetrahydrofolate + NADP(+) = (6R)-5,10-methenyltetrahydrofolate + NADPH. It carries out the reaction (6R)-5,10-methenyltetrahydrofolate + H2O = (6R)-10-formyltetrahydrofolate + H(+). The enzyme catalyses (6S)-5,6,7,8-tetrahydrofolate + formate + ATP = (6R)-10-formyltetrahydrofolate + ADP + phosphate. The protein operates within one-carbon metabolism; tetrahydrofolate interconversion. Trifunctional enzyme that catalyzes the interconversion of three forms of one-carbon-substituted tetrahydrofolate: (6R)-5,10-methylene-5,6,7,8-tetrahydrofolate, 5,10-methenyltetrahydrofolate and (6S)-10-formyltetrahydrofolate. These derivatives of tetrahydrofolate are differentially required in nucleotide and amino acid biosynthesis, (6S)-10-formyltetrahydrofolate being required for purine biosynthesis while (6R)-5,10-methylene-5,6,7,8-tetrahydrofolate is used for serine and methionine biosynthesis for instance. The sequence is that of C-1-tetrahydrofolate synthase, cytoplasmic (Mthfd1) from Mus musculus (Mouse).